The primary structure comprises 429 residues: Serine--tRNA ligase (429 aa).

Residue 235–237 (TAE) participates in L-serine binding. Residue 266-268 (RSE) participates in ATP binding. Glu-289 contacts L-serine. Residue 353 to 356 (EISS) participates in ATP binding. Residue Ser-389 coordinates L-serine.

It belongs to the class-II aminoacyl-tRNA synthetase family. Type-1 seryl-tRNA synthetase subfamily. As to quaternary structure, homodimer. The tRNA molecule binds across the dimer.

It localises to the cytoplasm. It catalyses the reaction tRNA(Ser) + L-serine + ATP = L-seryl-tRNA(Ser) + AMP + diphosphate + H(+). The catalysed reaction is tRNA(Sec) + L-serine + ATP = L-seryl-tRNA(Sec) + AMP + diphosphate + H(+). The protein operates within aminoacyl-tRNA biosynthesis; selenocysteinyl-tRNA(Sec) biosynthesis; L-seryl-tRNA(Sec) from L-serine and tRNA(Sec): step 1/1. In terms of biological role, catalyzes the attachment of serine to tRNA(Ser). Is also able to aminoacylate tRNA(Sec) with serine, to form the misacylated tRNA L-seryl-tRNA(Sec), which will be further converted into selenocysteinyl-tRNA(Sec). This chain is Serine--tRNA ligase, found in Haemophilus influenzae (strain 86-028NP).